A 261-amino-acid chain; its full sequence is Protein FAM78B (261 aa).

This sequence belongs to the FAM78 family.

The protein is Protein FAM78B (FAM78B) of Homo sapiens (Human).